Consider the following 65-residue polypeptide: Large ribosomal subunit protein bL35 (65 aa).

The span at 1–16 (MPKMKTHRASAKRFKK) shows a compositional bias: basic residues. A disordered region spans residues 1-24 (MPKMKTHRASAKRFKKTANGGLKS).

This sequence belongs to the bacterial ribosomal protein bL35 family.

This is Large ribosomal subunit protein bL35 from Leuconostoc mesenteroides subsp. mesenteroides (strain ATCC 8293 / DSM 20343 / BCRC 11652 / CCM 1803 / JCM 6124 / NCDO 523 / NBRC 100496 / NCIMB 8023 / NCTC 12954 / NRRL B-1118 / 37Y).